A 61-amino-acid chain; its full sequence is Large ribosomal subunit protein eL37 (61 aa).

Zn(2+) is bound by residues Cys20, Cys23, Cys35, and Cys38. The segment at 20 to 38 adopts a C4-type zinc-finger fold; it reads CRRCGRRAYHVRKKRCAAC.

The protein belongs to the eukaryotic ribosomal protein eL37 family. It depends on Zn(2+) as a cofactor.

Its function is as follows. Binds to the 23S rRNA. The polypeptide is Large ribosomal subunit protein eL37 (rpl37e) (Methanocaldococcus jannaschii (strain ATCC 43067 / DSM 2661 / JAL-1 / JCM 10045 / NBRC 100440) (Methanococcus jannaschii)).